A 213-amino-acid polypeptide reads, in one-letter code: Ephrin-A2 (213 aa).

An N-terminal signal peptide occupies residues 1 to 24 (MAPAQRPLLPLLLLLLPLPPPPFA). The Ephrin RBD domain occupies 34–174 (SDRYAVYWNR…RLKVYVRPTN (141 aa)). Asparagine 42 is a glycosylation site (N-linked (GlcNAc...) asparagine). 2 disulfides stabilise this stretch: cysteine 73/cysteine 114 and cysteine 102/cysteine 163. Asparagine 174 and asparagine 188 each carry an N-linked (GlcNAc...) asparagine glycan. A lipid anchor (GPI-anchor amidated asparagine) is attached at asparagine 188. The propeptide at 189 to 213 (NSCSSPGGCRLFLSTIPVLWTLLGS) is removed in mature form.

Belongs to the ephrin family. As to quaternary structure, binds to the receptor tyrosine kinases EPHA3, EPHA4 and EPHA5. Interacts with EPHA8; activates EPHA8.

It is found in the cell membrane. Cell surface GPI-bound ligand for Eph receptors, a family of receptor tyrosine kinases which are crucial for migration, repulsion and adhesion during neuronal, vascular and epithelial development. Binds promiscuously Eph receptors residing on adjacent cells, leading to contact-dependent bidirectional signaling into neighboring cells. The signaling pathway downstream of the receptor is referred to as forward signaling while the signaling pathway downstream of the ephrin ligand is referred to as reverse signaling. With the EPHA2 receptor may play a role in bone remodeling through regulation of osteoclastogenesis and osteoblastogenesis. The protein is Ephrin-A2 (EFNA2) of Homo sapiens (Human).